A 245-amino-acid polypeptide reads, in one-letter code: 1-(5-phosphoribosyl)-5-[(5-phosphoribosylamino)methylideneamino] imidazole-4-carboxamide isomerase (245 aa).

Asp-7 functions as the Proton acceptor in the catalytic mechanism. Asp-129 serves as the catalytic Proton donor.

This sequence belongs to the HisA/HisF family.

The protein resides in the cytoplasm. It catalyses the reaction 1-(5-phospho-beta-D-ribosyl)-5-[(5-phospho-beta-D-ribosylamino)methylideneamino]imidazole-4-carboxamide = 5-[(5-phospho-1-deoxy-D-ribulos-1-ylimino)methylamino]-1-(5-phospho-beta-D-ribosyl)imidazole-4-carboxamide. The protein operates within amino-acid biosynthesis; L-histidine biosynthesis; L-histidine from 5-phospho-alpha-D-ribose 1-diphosphate: step 4/9. The chain is 1-(5-phosphoribosyl)-5-[(5-phosphoribosylamino)methylideneamino] imidazole-4-carboxamide isomerase from Shewanella sp. (strain W3-18-1).